Consider the following 615-residue polypeptide: Leucine aminopeptidase 2 (615 aa).

A peptide is bound by residues 139–141 (QCQ) and 271–276 (PYGGME). Position 300 (His-300) interacts with Zn(2+). The active-site Proton acceptor is the Glu-301. Zn(2+)-binding residues include His-304 and Glu-323. The active-site Proton donor is Tyr-386.

It belongs to the peptidase M1 family. Requires Zn(2+) as cofactor.

The protein localises to the cytoplasm. The protein resides in the nucleus. It carries out the reaction an epoxide + H2O = an ethanediol. Aminopeptidase that preferentially cleaves di- and tripeptides. Also has low epoxide hydrolase activity (in vitro). Can hydrolyze the epoxide leukotriene LTA(4) but it forms preferentially 5,6-dihydroxy-7,9,11,14-eicosatetraenoic acid rather than the cytokine leukotriene B(4) as the product compared to the homologous mammalian enzyme (in vitro). The protein is Leucine aminopeptidase 2 of Aspergillus oryzae (strain ATCC 42149 / RIB 40) (Yellow koji mold).